The chain runs to 143 residues: Nucleoside diphosphate kinase (143 aa).

6 residues coordinate ATP: Lys11, Phe59, Arg87, Thr93, Arg104, and Asn114. His117 acts as the Pros-phosphohistidine intermediate in catalysis.

It belongs to the NDK family. As to quaternary structure, homotetramer. Mg(2+) is required as a cofactor.

It is found in the cytoplasm. The catalysed reaction is a 2'-deoxyribonucleoside 5'-diphosphate + ATP = a 2'-deoxyribonucleoside 5'-triphosphate + ADP. It carries out the reaction a ribonucleoside 5'-diphosphate + ATP = a ribonucleoside 5'-triphosphate + ADP. Functionally, major role in the synthesis of nucleoside triphosphates other than ATP. The ATP gamma phosphate is transferred to the NDP beta phosphate via a ping-pong mechanism, using a phosphorylated active-site intermediate. The protein is Nucleoside diphosphate kinase of Sodalis glossinidius (strain morsitans).